The chain runs to 637 residues: Chaperone protein HtpG (637 aa).

An a; substrate-binding region spans residues 1–345 (MSQQETHGFQ…SNDLPLNVSR (345 aa)). The b stretch occupies residues 346 to 562 (EILQDNHITK…EGEMSSQMIK (217 aa)). Residues 563–637 (LMQAAGQPVP…MNQMLLANLK (75 aa)) form a c region.

This sequence belongs to the heat shock protein 90 family. In terms of assembly, homodimer.

It is found in the cytoplasm. Molecular chaperone. Has ATPase activity. In Shewanella sp. (strain ANA-3), this protein is Chaperone protein HtpG.